Reading from the N-terminus, the 181-residue chain is MSQRLKTLYQDSIVPKLTEQFGYSNVHEVPKLVKISVNRGLGEASSNAKAMESSIKELSTITGQRPVITRAKKAIAGFKIREGMPVGVMVTLRSEKMYSFLDRLISLALPRIRDFRGISPKSFDGRGNYSLGIREQLIFPEIDYDSIDQIRGMDISIITTARTDEEGRALLREMGMPFRES.

The protein belongs to the universal ribosomal protein uL5 family. As to quaternary structure, part of the 50S ribosomal subunit; part of the 5S rRNA/L5/L18/L25 subcomplex. Contacts the 5S rRNA and the P site tRNA. Forms a bridge to the 30S subunit in the 70S ribosome.

Its function is as follows. This is one of the proteins that bind and probably mediate the attachment of the 5S RNA into the large ribosomal subunit, where it forms part of the central protuberance. In the 70S ribosome it contacts protein S13 of the 30S subunit (bridge B1b), connecting the 2 subunits; this bridge is implicated in subunit movement. Contacts the P site tRNA; the 5S rRNA and some of its associated proteins might help stabilize positioning of ribosome-bound tRNAs. This Picosynechococcus sp. (strain ATCC 27264 / PCC 7002 / PR-6) (Agmenellum quadruplicatum) protein is Large ribosomal subunit protein uL5.